Here is a 136-residue protein sequence, read N- to C-terminus: Protein NrdI (136 aa).

The protein belongs to the NrdI family.

Its function is as follows. Probably involved in ribonucleotide reductase function. The polypeptide is Protein NrdI (Salmonella dublin (strain CT_02021853)).